Here is an 89-residue protein sequence, read N- to C-terminus: Small ribosomal subunit protein uS15 (89 aa).

The tract at residues methionine 1–serine 24 is disordered. A compositionally biased stretch (basic and acidic residues) spans isoleucine 11–serine 20.

It belongs to the universal ribosomal protein uS15 family. As to quaternary structure, part of the 30S ribosomal subunit. Forms a bridge to the 50S subunit in the 70S ribosome, contacting the 23S rRNA.

Functionally, one of the primary rRNA binding proteins, it binds directly to 16S rRNA where it helps nucleate assembly of the platform of the 30S subunit by binding and bridging several RNA helices of the 16S rRNA. Its function is as follows. Forms an intersubunit bridge (bridge B4) with the 23S rRNA of the 50S subunit in the ribosome. The polypeptide is Small ribosomal subunit protein uS15 (Thioalkalivibrio sulfidiphilus (strain HL-EbGR7)).